The sequence spans 361 residues: Phosphoserine aminotransferase (361 aa).

Arginine 42 lines the L-glutamate pocket. Residues 76 to 77, tryptophan 102, threonine 153, aspartate 173, and glutamine 196 contribute to the pyridoxal 5'-phosphate site; that span reads AR. Lysine 197 is subject to N6-(pyridoxal phosphate)lysine. 238–239 serves as a coordination point for pyridoxal 5'-phosphate; it reads NT.

Belongs to the class-V pyridoxal-phosphate-dependent aminotransferase family. SerC subfamily. In terms of assembly, homodimer. Requires pyridoxal 5'-phosphate as cofactor.

Its subcellular location is the cytoplasm. It carries out the reaction O-phospho-L-serine + 2-oxoglutarate = 3-phosphooxypyruvate + L-glutamate. It catalyses the reaction 4-(phosphooxy)-L-threonine + 2-oxoglutarate = (R)-3-hydroxy-2-oxo-4-phosphooxybutanoate + L-glutamate. It functions in the pathway amino-acid biosynthesis; L-serine biosynthesis; L-serine from 3-phospho-D-glycerate: step 2/3. The protein operates within cofactor biosynthesis; pyridoxine 5'-phosphate biosynthesis; pyridoxine 5'-phosphate from D-erythrose 4-phosphate: step 3/5. Its function is as follows. Catalyzes the reversible conversion of 3-phosphohydroxypyruvate to phosphoserine and of 3-hydroxy-2-oxo-4-phosphonooxybutanoate to phosphohydroxythreonine. The polypeptide is Phosphoserine aminotransferase (Mannheimia succiniciproducens (strain KCTC 0769BP / MBEL55E)).